The chain runs to 150 residues: Snaclec bothrojaracin subunit beta (150 aa).

Positions 1-23 are cleaved as a signal peptide; that stretch reads MGRFIFVSFGLLVVFLSLSGTAA. 3 disulfides stabilise this stretch: Cys25–Cys36, Cys53–Cys146, and Cys123–Cys138. In terms of domain architecture, C-type lectin spans 32-147; sequence YEGSCYRVFE…CTKLEYFVCE (116 aa).

It belongs to the snaclec family. Heterodimer of subunits alpha and beta; disulfide-linked. In terms of tissue distribution, expressed by the venom gland.

The protein resides in the secreted. In terms of biological role, this potent antithrombotic agent acts in a calcium-independent manner. Exerts its anticoagulant effect by two distinct mechanisms. It binds to activated thrombin through exosite 1, blocking fibrinogen clotting, platelet activation, factor V activation and other effects, and it interacts with prothrombin (F2), decreasing its proteolytic activation -especially in the presence of factor Va. In vivo, intravenous injection before thrombosis induction causes a significant decrease in thrombus weight. Furthermore, BJC shows a prolonged effect by remaining in the plasma bound to prothrombin for at least 12 hours. This is Snaclec bothrojaracin subunit beta from Bothrops jararaca (Jararaca).